A 541-amino-acid chain; its full sequence is Glucose-6-phosphate isomerase (541 aa).

Catalysis depends on Glu354, which acts as the Proton donor. Residues His385 and Lys505 contribute to the active site.

This sequence belongs to the GPI family.

Its subcellular location is the cytoplasm. The enzyme catalyses alpha-D-glucose 6-phosphate = beta-D-fructose 6-phosphate. Its pathway is carbohydrate biosynthesis; gluconeogenesis. It participates in carbohydrate degradation; glycolysis; D-glyceraldehyde 3-phosphate and glycerone phosphate from D-glucose: step 2/4. Catalyzes the reversible isomerization of glucose-6-phosphate to fructose-6-phosphate. In Cupriavidus metallidurans (strain ATCC 43123 / DSM 2839 / NBRC 102507 / CH34) (Ralstonia metallidurans), this protein is Glucose-6-phosphate isomerase.